Consider the following 409-residue polypeptide: Pectin acetylesterase 4 (409 aa).

An N-terminal signal peptide occupies residues 1–32; that stretch reads MVIRSLLQCRTWSKSDWLLASIGIVLIVYSFS. Residues N36 and N163 are each glycosylated (N-linked (GlcNAc...) asparagine). Active-site charge relay system residues include S199, D295, and H362. N-linked (GlcNAc...) asparagine glycosylation is found at N379 and N406.

It belongs to the pectinacetylesterase family.

The protein localises to the secreted. It is found in the cell wall. Functionally, hydrolyzes acetyl esters in homogalacturonan regions of pectin. In type I primary cell wall, galacturonic acid residues of pectin can be acetylated at the O-2 and O-3 positions. Decreasing the degree of acetylation of pectin gels in vitro alters their physical properties. The protein is Pectin acetylesterase 4 of Arabidopsis thaliana (Mouse-ear cress).